The following is a 239-amino-acid chain: Tetraspanin-9 (239 aa).

The next 3 membrane-spanning stretches (helical) occupy residues F14–L34, L56–I76, and F86–V106. 2 N-linked (GlcNAc...) asparagine glycosylation sites follow: N180 and N181. Residues V204–M224 traverse the membrane as a helical segment.

The protein belongs to the tetraspanin (TM4SF) family. Found in a complex with GP6. Post-translationally, glycosylated.

Its subcellular location is the membrane. This chain is Tetraspanin-9 (TSPAN9), found in Ovis aries (Sheep).